Reading from the N-terminus, the 108-residue chain is Large ribosomal subunit protein uL24 (108 aa).

The protein belongs to the universal ribosomal protein uL24 family. As to quaternary structure, part of the 50S ribosomal subunit.

One of two assembly initiator proteins, it binds directly to the 5'-end of the 23S rRNA, where it nucleates assembly of the 50S subunit. Functionally, one of the proteins that surrounds the polypeptide exit tunnel on the outside of the subunit. This Moorella thermoacetica (strain ATCC 39073 / JCM 9320) protein is Large ribosomal subunit protein uL24.